A 521-amino-acid chain; its full sequence is GMP synthase [glutamine-hydrolyzing] (521 aa).

One can recognise a Glutamine amidotransferase type-1 domain in the interval 8–203; the sequence is KILILDFGAQ…VVDVCGCQTL (196 aa). The active-site Nucleophile is the cysteine 85. Active-site residues include histidine 177 and glutamate 179. Residues 204 to 396 form the GMPS ATP-PPase domain; the sequence is WTAANIIDDQ…LGLPRTMVYR (193 aa). Residue 231 to 237 participates in ATP binding; the sequence is SGGVDSS.

Homodimer.

The catalysed reaction is XMP + L-glutamine + ATP + H2O = GMP + L-glutamate + AMP + diphosphate + 2 H(+). The protein operates within purine metabolism; GMP biosynthesis; GMP from XMP (L-Gln route): step 1/1. In terms of biological role, catalyzes the synthesis of GMP from XMP. The protein is GMP synthase [glutamine-hydrolyzing] of Xanthomonas campestris pv. campestris (strain B100).